We begin with the raw amino-acid sequence, 168 residues long: Peptide deformylase 1 (168 aa).

Residues cysteine 91 and histidine 133 each contribute to the Fe cation site. The active site involves glutamate 134. Residue histidine 137 participates in Fe cation binding.

It belongs to the polypeptide deformylase family. Requires Fe(2+) as cofactor.

The enzyme catalyses N-terminal N-formyl-L-methionyl-[peptide] + H2O = N-terminal L-methionyl-[peptide] + formate. Its function is as follows. Removes the formyl group from the N-terminal Met of newly synthesized proteins. Requires at least a dipeptide for an efficient rate of reaction. N-terminal L-methionine is a prerequisite for activity but the enzyme has broad specificity at other positions. This chain is Peptide deformylase 1, found in Shewanella oneidensis (strain ATCC 700550 / JCM 31522 / CIP 106686 / LMG 19005 / NCIMB 14063 / MR-1).